The primary structure comprises 289 residues: ATP synthase gamma chain (289 aa).

This sequence belongs to the ATPase gamma chain family. As to quaternary structure, F-type ATPases have 2 components, CF(1) - the catalytic core - and CF(0) - the membrane proton channel. CF(1) has five subunits: alpha(3), beta(3), gamma(1), delta(1), epsilon(1). CF(0) has three main subunits: a, b and c.

Its subcellular location is the cell inner membrane. In terms of biological role, produces ATP from ADP in the presence of a proton gradient across the membrane. The gamma chain is believed to be important in regulating ATPase activity and the flow of protons through the CF(0) complex. This is ATP synthase gamma chain from Cereibacter sphaeroides (strain ATCC 17023 / DSM 158 / JCM 6121 / CCUG 31486 / LMG 2827 / NBRC 12203 / NCIMB 8253 / ATH 2.4.1.) (Rhodobacter sphaeroides).